We begin with the raw amino-acid sequence, 353 residues long: Fe(3+) ions import ATP-binding protein FbpC 1 (353 aa).

Positions Val-9–Met-239 constitute an ABC transporter domain. Gly-41 to Thr-48 contacts ATP.

It belongs to the ABC transporter superfamily. Fe(3+) ion importer (TC 3.A.1.10) family. The complex is composed of two ATP-binding proteins (FbpC), two transmembrane proteins (FbpB) and a solute-binding protein (FbpA).

The protein resides in the cell inner membrane. The catalysed reaction is Fe(3+)(out) + ATP + H2O = Fe(3+)(in) + ADP + phosphate + H(+). In terms of biological role, part of the ABC transporter complex FbpABC involved in Fe(3+) ions import. Responsible for energy coupling to the transport system. The protein is Fe(3+) ions import ATP-binding protein FbpC 1 of Rhizobium meliloti (strain 1021) (Ensifer meliloti).